Consider the following 198-residue polypeptide: MTDLTLAALKTAPLAQVRQYLLHLLATHAYKEGDFILSSGQPSTYYINGKLVTLRAEGALAIGRLLLTELPDQVEAVAGLTLGADPIVSAVSTVSAYEEKPVVALIIRKEAKGHGTKAYIEGPELAPGTKVVVLEDVVTTGKSAMLAVERLRNAGYQVDTVISLVDRQQGGREFYQSQGLTFQALFTIGDIQQVYRQK.

Residues arginine 108, lysine 109, lysine 112, histidine 114, and 135–143 (EDVVTTGKS) contribute to the 5-phospho-alpha-D-ribose 1-diphosphate site. Threonine 139 and arginine 167 together coordinate orotate.

It belongs to the purine/pyrimidine phosphoribosyltransferase family. PyrE subfamily. Homodimer. Mg(2+) serves as cofactor.

The enzyme catalyses orotidine 5'-phosphate + diphosphate = orotate + 5-phospho-alpha-D-ribose 1-diphosphate. The protein operates within pyrimidine metabolism; UMP biosynthesis via de novo pathway; UMP from orotate: step 1/2. In terms of biological role, catalyzes the transfer of a ribosyl phosphate group from 5-phosphoribose 1-diphosphate to orotate, leading to the formation of orotidine monophosphate (OMP). This is Orotate phosphoribosyltransferase from Synechocystis sp. (strain ATCC 27184 / PCC 6803 / Kazusa).